Reading from the N-terminus, the 237-residue chain is MRVVVLSGAGISAESDVPTFRDDKNGLWARFDPYQLSSTQGWQRNPERVWGWYLWRHYLVANVKPNDGHRAIAAWQEQIEVSVITQNVDDLHERAGSTPVHHLHGSLFKFHCARCNVAYTGALPDMPEPVLEVDPPVCYCGGLIRPAIVWFGEPLPDEPWRRAVEATETTDVMVVVGTSAIVYPAAGLPELALSRGAVVIEVNPEPTPLTKNATISIRETASQALPGLLQRLPALLK.

In terms of domain architecture, Deacetylase sirtuin-type spans 1–235 (MRVVVLSGAG…PGLLQRLPAL (235 aa)). 8 to 28 (GAGISAESDVPTFRDDKNGLW) is an NAD(+) binding site. Residues Tyr-53 and Arg-56 each contribute to the substrate site. Residue 86-89 (QNVD) participates in NAD(+) binding. His-104 acts as the Proton acceptor in catalysis. The Zn(2+) site is built by Cys-112, Cys-115, Cys-138, and Cys-140. Residues 177 to 179 (GTS), 203 to 205 (NPE), and Ala-221 contribute to the NAD(+) site.

It belongs to the sirtuin family. Class III subfamily. The cofactor is Zn(2+).

The protein resides in the cytoplasm. It carries out the reaction N(6)-acetyl-L-lysyl-[protein] + NAD(+) + H2O = 2''-O-acetyl-ADP-D-ribose + nicotinamide + L-lysyl-[protein]. The catalysed reaction is N(6)-succinyl-L-lysyl-[protein] + NAD(+) + H2O = 2''-O-succinyl-ADP-D-ribose + nicotinamide + L-lysyl-[protein]. In terms of biological role, NAD-dependent lysine deacetylase and desuccinylase that specifically removes acetyl and succinyl groups on target proteins. Modulates the activities of several proteins which are inactive in their acylated form. The polypeptide is NAD-dependent protein deacylase (Mycobacterium leprae (strain TN)).